Consider the following 269-residue polypeptide: Shikimate dehydrogenase (NADP(+)) (269 aa).

Shikimate-binding positions include Thr22–Ser24 and Thr68. Lys72 serves as the catalytic Proton acceptor. Residues Asn93 and Asp104 each contribute to the shikimate site. Residues Gly128–Ala132, Asn152–Arg157, and Phe210 each bind NADP(+). Tyr212 lines the shikimate pocket. Gly233 provides a ligand contact to NADP(+).

Belongs to the shikimate dehydrogenase family. As to quaternary structure, homodimer.

The catalysed reaction is shikimate + NADP(+) = 3-dehydroshikimate + NADPH + H(+). Its pathway is metabolic intermediate biosynthesis; chorismate biosynthesis; chorismate from D-erythrose 4-phosphate and phosphoenolpyruvate: step 4/7. Its function is as follows. Involved in the biosynthesis of the chorismate, which leads to the biosynthesis of aromatic amino acids. Catalyzes the reversible NADPH linked reduction of 3-dehydroshikimate (DHSA) to yield shikimate (SA). The polypeptide is Shikimate dehydrogenase (NADP(+)) (Saccharolobus solfataricus (strain ATCC 35092 / DSM 1617 / JCM 11322 / P2) (Sulfolobus solfataricus)).